Reading from the N-terminus, the 357-residue chain is tRNA pseudouridine synthase Pus10 (357 aa).

Positions 1 to 118 constitute a THUMP domain; sequence MNLCRECYGI…TFTFELQIRP (118 aa). Aspartate 187 acts as the Nucleophile in catalysis. Positions 251 and 322 each coordinate substrate.

It belongs to the pseudouridine synthase Pus10 family.

It carries out the reaction uridine(54) in tRNA = pseudouridine(54) in tRNA. The catalysed reaction is uridine(55) in tRNA = pseudouridine(55) in tRNA. In terms of biological role, responsible for synthesis of pseudouridine from uracil-54 and uracil-55 in the psi GC loop of transfer RNAs. This Archaeoglobus fulgidus (strain ATCC 49558 / DSM 4304 / JCM 9628 / NBRC 100126 / VC-16) protein is tRNA pseudouridine synthase Pus10.